The chain runs to 328 residues: Ribosomal RNA large subunit methyltransferase F (328 aa).

Residues 1-38 (MTDTPKPPRKKPQRPAKPAAPREKATLHPRNRHQGHYD) are disordered.

This sequence belongs to the methyltransferase superfamily. METTL16/RlmF family.

It is found in the cytoplasm. The enzyme catalyses adenosine(1618) in 23S rRNA + S-adenosyl-L-methionine = N(6)-methyladenosine(1618) in 23S rRNA + S-adenosyl-L-homocysteine + H(+). Specifically methylates the adenine in position 1618 of 23S rRNA. This chain is Ribosomal RNA large subunit methyltransferase F, found in Pseudomonas syringae pv. tomato (strain ATCC BAA-871 / DC3000).